The sequence spans 188 residues: Tumor necrosis factor alpha-induced protein 8-like protein (188 aa).

Belongs to the TNFAIP8 family.

In Drosophila pseudoobscura pseudoobscura (Fruit fly), this protein is Tumor necrosis factor alpha-induced protein 8-like protein.